We begin with the raw amino-acid sequence, 561 residues long: Centromere protein T (561 aa).

The interval 1 to 78 is disordered; it reads MADHNPDGDP…IGRSAHVQAR (78 aa). Positions 18–27 are enriched in basic and acidic residues; that stretch reads RVLDTADPRT. Residues 45–57 show a composition bias toward polar residues; the sequence is TASSRRLSGQTKT. S47 bears the Phosphoserine mark. T85 carries the phosphothreonine modification. Residues 93 to 421 form a flexible stalk domain region; that stretch reads ILLTAPESSI…RHHQFPEPAP (329 aa). Disordered stretches follow at residues 114-134, 256-293, and 314-457; these read APQV…ELQL, HSLP…GKPA, and SSGV…DPHK. Residues 276-289 are compositionally biased toward polar residues; it reads RTQSSGPGLQNNSP. Over residues 329 to 341 the composition is skewed to basic and acidic residues; that stretch reads GVEEAEKKMKEEG. Residues S343, S345, S356, S373, S385, S386, and S397 each carry the phosphoserine modification. A compositionally biased stretch (polar residues) spans 365 to 376; it reads TQVTEAEGSQGT. Over residues 439–450 the composition is skewed to low complexity; sequence RCPPRSRTTGPR.

This sequence belongs to the CENP-T/CNN1 family. In terms of assembly, component of the CENPA-CAD complex, composed of CENPI, CENPK, CENPL, CENPO, CENPP, CENPQ, CENPR and CENPS. The CENPA-CAD complex is probably recruited on centromeres by the CENPA-NAC complex, at least composed of CENPA, CENPC, CENPH, CENPM, CENPN, CENPT and CENPU. Identified in a centromeric complex containing histones H2A, H2B, H3 and H4, and at least CENPA, CENPB, CENPC, CENPT, CENPN, HJURP, SUPT16H, SSRP1 and RSF1. Interacts (via N-terminus) with the NDC80 complex. Heterodimer with CENPW; this dimer coassembles with CENPS-CENPX heterodimers at centromeres to form the tetrameric CENP-T-W-S-X complex. Dynamically phosphorylated during the cell cycle. Phosphorylated during G2 phase, metaphase and anaphase, but not during telophase or G1 phase.

The protein localises to the nucleus. It is found in the chromosome. It localises to the centromere. The protein resides in the kinetochore. In terms of biological role, component of the CENPA-NAC (nucleosome-associated) complex, a complex that plays a central role in assembly of kinetochore proteins, mitotic progression and chromosome segregation. The CENPA-NAC complex recruits the CENPA-CAD (nucleosome distal) complex and may be involved in incorporation of newly synthesized CENPA into centromeres. Part of a nucleosome-associated complex that binds specifically to histone H3-containing nucleosomes at the centromere, as opposed to nucleosomes containing CENPA. Component of the heterotetrameric CENP-T-W-S-X complex that binds and supercoils DNA, and plays an important role in kinetochore assembly. CENPT has a fundamental role in kinetochore assembly and function. It is one of the inner kinetochore proteins, with most further proteins binding downstream. Required for normal chromosome organization and normal progress through mitosis. This is Centromere protein T (CENPT) from Macaca fascicularis (Crab-eating macaque).